The primary structure comprises 327 residues: Thiamine-binding periplasmic protein (327 aa).

Residues Met1–Ala18 form the signal peptide. Residues Asp59–Gly60, Ser161–Thr162, Trp197, and Tyr215–Ser218 each bind thiamine.

The protein belongs to the bacterial solute-binding protein 1 family. Monomer in solution. The complex is composed of two ATP-binding proteins (ThiQ), two transmembrane proteins (ThiP) and a solute-binding protein (ThiB).

It is found in the periplasm. Transport is inhibited by the sulfhydryl-specific modifier N-ethylmaleimide. Part of the ABC transporter complex ThiBPQ involved in thiamine import. Binds thiamine, thiamine phosphate and thiamine diphosphate with high affinity. In Escherichia coli (strain K12), this protein is Thiamine-binding periplasmic protein (thiB).